We begin with the raw amino-acid sequence, 208 residues long: Dephospho-CoA kinase (208 aa).

The DPCK domain maps to 11-207 (VIGLTGGIAS…EYYLELAQHD (197 aa)). 19 to 24 (ASGKSA) provides a ligand contact to ATP.

This sequence belongs to the CoaE family.

Its subcellular location is the cytoplasm. The enzyme catalyses 3'-dephospho-CoA + ATP = ADP + CoA + H(+). It functions in the pathway cofactor biosynthesis; coenzyme A biosynthesis; CoA from (R)-pantothenate: step 5/5. Functionally, catalyzes the phosphorylation of the 3'-hydroxyl group of dephosphocoenzyme A to form coenzyme A. The sequence is that of Dephospho-CoA kinase from Hahella chejuensis (strain KCTC 2396).